Here is a 343-residue protein sequence, read N- to C-terminus: Heat-inducible transcription repressor HrcA (343 aa).

It belongs to the HrcA family.

Its function is as follows. Negative regulator of class I heat shock genes (grpE-dnaK-dnaJ and groELS operons). Prevents heat-shock induction of these operons. The chain is Heat-inducible transcription repressor HrcA from Lysinibacillus sphaericus (Bacillus sphaericus).